The chain runs to 356 residues: Iron-regulated protein A (356 aa).

The signal sequence occupies residues 1-44; sequence MIVTGSQVRQGLNTWFVLPLRRTAIGLGCAGVATLFSACGQTQA. Hydrophilic stretches follow at residues 75–145 and 240–310; these read QALQ…EQRE and GGPL…ATAR.

In terms of assembly, the iron-regulated protein A is one unit of the protein complex CPVI-4, which is synthesized under iron deficient conditions.

Its subcellular location is the cell inner membrane. In terms of biological role, irpA occurs under iron-deficient growth conditions in cyanobacterium Synechococcus and disappears in cells recovering from iron starvation. It seems to be involved in iron acquisition, uptake or storage. The sequence is that of Iron-regulated protein A (irpA) from Synechococcus elongatus (strain ATCC 33912 / PCC 7942 / FACHB-805) (Anacystis nidulans R2).